The following is a 495-amino-acid chain: Protein YhjJ (495 aa).

An N-terminal signal peptide occupies residues Met-1–Ala-24.

It belongs to the peptidase M16 family.

The protein localises to the periplasm. The polypeptide is Protein YhjJ (yhjJ) (Salmonella typhimurium (strain LT2 / SGSC1412 / ATCC 700720)).